Reading from the N-terminus, the 117-residue chain is Non-specific lipid-transfer protein B (117 aa).

The signal sequence occupies residues 1–25; that stretch reads MAGLVKLSCLVLACMIVAGPIATNA. Disulfide bonds link C29/C76, C39/C53, C54/C99, and C74/C113.

Belongs to the plant LTP family.

In terms of biological role, plant non-specific lipid-transfer proteins transfer phospholipids as well as galactolipids across membranes. May play a role in wax or cutin deposition in the cell walls of expanding epidermal cells and certain secretory tissues. This is Non-specific lipid-transfer protein B (WAX9B) from Brassica oleracea var. italica (Broccoli).